The chain runs to 67 residues: Beta-defensin 103A (67 aa).

Residues 1 to 22 (MRIHFLLFALLFLFLMPVPGNG) form the signal peptide. 3 cysteine pairs are disulfide-bonded: Cys-33/Cys-62, Cys-40/Cys-55, and Cys-45/Cys-63.

Belongs to the beta-defensin family.

It is found in the secreted. Functionally, exhibits antimicrobial activity against Gram-positive and Gram-negative bacteria. The protein is Beta-defensin 103A (DEFB103A) of Equus caballus (Horse).